Here is a 200-residue protein sequence, read N- to C-terminus: ASI1-immunoprecipitated protein 1 (200 aa).

In terms of domain architecture, RRM spans 18-101 (RTVYVDELTP…RPVRACAAEP (84 aa)).

Component of the ASI1-AIPP1-EDM2 (AAE) RNA regulatory complex composed of at least AIPP1/EDM3, ASI1 and EDM2 and may contain CPL2, AIPP2 and AIPP3/BDT1. Binds directly to ASI1 and EDM2 and may function as a bridge protein between them. Co-associates with EDM2 to histone H3 lysine 9 dimethylation (H3K9me2)-marked chromatin and transcripts at a critical proximal polyadenylation site of RPP7 to hamper proximal transcript polyadeylation/termination.

The protein resides in the nucleus. Functionally, prevents gene silencing by suppressing CHG methylation as well as histone H3 lysine 9 dimethylation (H3K9me2) status at target loci. Collaboratively with ASI1 and EDM2, the AAE complex regulates alternative RNA processing (e.g. alternative splicing) and epigenetic silencing (e.g. H3K9me2) of intronic heterochromatin-containing genes as well as genic heterochromatin-containing genes by promoting distal 3' polyadenylation, thus being required for the accumulation of their full-length transcripts. May also modulate transposable elements (TE) expression. Mediates RPP7-dependent race-specific disease resistance by promoting histone H3 lysine 9 dimethylation (H3K9me2) at the proximal RPP7 polyadenylation site, thus controlling alternative polyadenylation of RPP7 immune receptor transcripts and facilitating 2-phosphoserine RNAPII occupancy. In cv. Columbia, required for RPP7-dependent disease resistance against the Hyaloperonospora arabidopsidis isolate Hiks1. In Arabidopsis thaliana (Mouse-ear cress), this protein is ASI1-immunoprecipitated protein 1.